The primary structure comprises 362 residues: 3-dehydroquinate synthase (362 aa).

Residues 71–76 (DGEQYK), 105–109 (GVVGD), 129–130 (TT), K142, K151, and 169–172 (CLKT) contribute to the NAD(+) site. Zn(2+) contacts are provided by E184, H247, and H264.

Belongs to the sugar phosphate cyclases superfamily. Dehydroquinate synthase family. Co(2+) is required as a cofactor. Requires Zn(2+) as cofactor. NAD(+) serves as cofactor.

The protein resides in the cytoplasm. It catalyses the reaction 7-phospho-2-dehydro-3-deoxy-D-arabino-heptonate = 3-dehydroquinate + phosphate. The protein operates within metabolic intermediate biosynthesis; chorismate biosynthesis; chorismate from D-erythrose 4-phosphate and phosphoenolpyruvate: step 2/7. Its function is as follows. Catalyzes the conversion of 3-deoxy-D-arabino-heptulosonate 7-phosphate (DAHP) to dehydroquinate (DHQ). The protein is 3-dehydroquinate synthase of Escherichia coli (strain 55989 / EAEC).